Reading from the N-terminus, the 238-residue chain is Androgen-induced gene 1 protein (238 aa).

Residues 1 to 12 (MALVPCQVLRMA) lie on the Cytoplasmic side of the membrane. Residues 13-30 (ILLSYCSILCNYKAIEMP) traverse the membrane as a helical segment. Residues 31–44 (SHQTYGGSWKFLTF) are Extracellular-facing. Residues 45–67 (IDLVIQAVFFGICVLTDLSSLLT) form a helical membrane-spanning segment. Residues 68–87 (RGSGNQEQERQLKKLISLRD) lie on the Cytoplasmic side of the membrane. The helical transmembrane segment at 88–110 (WMLAVLAFPVGVFVVAVFWIIYA) threads the bilayer. The Extracellular segment spans residues 111-124 (YDREMIYPKLLDNF). A helical transmembrane segment spans residues 125–144 (IPGWLNHGMHTTVLPFILIE). Residues 145–156 (MRTSHHQYPSRS) are Cytoplasmic-facing. The chain crosses the membrane as a helical span at residues 157–179 (SGLTAICTFSVGYILWVCWVHHV). Residues 180-193 (TGMWVYPFLEHIGP) are Extracellular-facing. The helical transmembrane segment at 194 to 216 (GARIIFFGSTTILMNFLYLLGEV) threads the bilayer. At 217-238 (LNNYIWDTQKSMEEEKEKPKLE) the chain is on the cytoplasmic side.

Belongs to the AIG1 family. Highly expressed in heart, ovary, testis, liver, and kidney, at lower levels in spleen, prostate, brain, skeletal muscle, pancreas, small intestine and colon, and undetected in peripheral blood leukocytes, thymus, lung and placenta. AIG1 expression is higher in hair follicles from males than from females.

It localises to the cell membrane. It carries out the reaction 9-hexadecanoyloxy-octadecanoate + H2O = 9-hydroxy-octadecanoate + hexadecanoate + H(+). The enzyme catalyses 12-hexadecanoyloxy-octadecanoate + H2O = 12-hydroxyoctadecanoate + hexadecanoate + H(+). The catalysed reaction is 9-(9Z-hexadecenoyloxy)-octadecanoate + H2O = (9Z)-hexadecenoate + 9-hydroxy-octadecanoate + H(+). It catalyses the reaction 12-(9Z-hexadecenoyloxy)-octadecanoate + H2O = 12-hydroxyoctadecanoate + (9Z)-hexadecenoate + H(+). It carries out the reaction 13-(9Z-hexadecenoyloxy)-octadecanoate + H2O = 13-hydroxy-octadecanoate + (9Z)-hexadecenoate + H(+). The enzyme catalyses 9-octadecanoyloxy-octadecanoate + H2O = 9-hydroxy-octadecanoate + octadecanoate + H(+). The catalysed reaction is 12-octadecanoyloxy-octadecanoate + H2O = 12-hydroxyoctadecanoate + octadecanoate + H(+). It catalyses the reaction 13-octadecanoyloxy-octadecanoate + H2O = 13-hydroxy-octadecanoate + octadecanoate + H(+). It carries out the reaction 9-(9Z-octadecenoyloxy)-octadecanoate + H2O = 9-hydroxy-octadecanoate + (9Z)-octadecenoate + H(+). The enzyme catalyses 12-(9Z-octadecenoyloxy)-octadecanoate + H2O = 12-hydroxyoctadecanoate + (9Z)-octadecenoate + H(+). The catalysed reaction is 13-(9Z-octadecenoyloxy)-octadecanoate + H2O = 13-hydroxy-octadecanoate + (9Z)-octadecenoate + H(+). It catalyses the reaction 5-(9Z-hexadecenoyloxy)-octadecanoate + H2O = 5-hydroxy-octadecanoate + (9Z)-hexadecenoate + H(+). Inhibited by N-hydroxyhydantoin carbamate JJH260 and beta-lactone KC01. Functionally, hydrolyzes bioactive fatty-acid esters of hydroxy-fatty acids (FAHFAs), but not other major classes of lipids. Show a preference for FAHFAs with branching distal from the carboxylate head group of the lipids. This Homo sapiens (Human) protein is Androgen-induced gene 1 protein (AIG1).